The chain runs to 223 residues: Cytochrome c biogenesis ATP-binding export protein CcmA (223 aa).

The region spanning 20–222 (LAAHALTYSR…PTRLLHLKKA (203 aa)) is the ABC transporter domain. 52–59 (GPNGIGKT) lines the ATP pocket.

This sequence belongs to the ABC transporter superfamily. CcmA exporter (TC 3.A.1.107) family. As to quaternary structure, the complex is composed of two ATP-binding proteins (CcmA) and two transmembrane proteins (CcmB).

The protein resides in the cell inner membrane. The enzyme catalyses heme b(in) + ATP + H2O = heme b(out) + ADP + phosphate + H(+). Its function is as follows. Part of the ABC transporter complex CcmAB involved in the biogenesis of c-type cytochromes; once thought to export heme, this seems not to be the case, but its exact role is uncertain. Responsible for energy coupling to the transport system. The protein is Cytochrome c biogenesis ATP-binding export protein CcmA of Xylella fastidiosa (strain 9a5c).